The chain runs to 142 residues: Midkine (142 aa).

Positions 1–21 (MELRAFCVILLITFLAVSSQA) are cleaved as a signal peptide. 5 disulfides stabilise this stretch: Cys36/Cys60, Cys44/Cys69, Cys51/Cys73, Cys83/Cys115, and Cys93/Cys125.

It belongs to the pleiotrophin family.

Its subcellular location is the secreted. Its function is as follows. Secreted protein that functions as a cytokine and growth factor and mediates its signal through cell-surface proteoglycan and non-proteoglycan receptors. Binds cell-surface proteoglycan receptors via their chondroitin sulfate (CS) groups. Thereby regulates many processes like inflammatory response, cell proliferation, cell adhesion, cell growth, cell survival, tissue regeneration, cell differentiation and cell migration. Inhibits mesoderm formation and promotes neural formation during development. Plays a role in development of the neuromuscular junction (NMJ). Has antibacterial activity against both Gram-positive and Gram-negative bacteria. The chain is Midkine from Xenopus tropicalis (Western clawed frog).